The primary structure comprises 179 residues: Peptidyl-tRNA hydrolase (179 aa).

Tyr-15 is a tRNA binding site. His-20 acts as the Proton acceptor in catalysis. Tyr-66, Asn-68, and Asn-114 together coordinate tRNA.

This sequence belongs to the PTH family. As to quaternary structure, monomer.

Its subcellular location is the cytoplasm. It carries out the reaction an N-acyl-L-alpha-aminoacyl-tRNA + H2O = an N-acyl-L-amino acid + a tRNA + H(+). Functionally, hydrolyzes ribosome-free peptidyl-tRNAs (with 1 or more amino acids incorporated), which drop off the ribosome during protein synthesis, or as a result of ribosome stalling. Its function is as follows. Catalyzes the release of premature peptidyl moieties from peptidyl-tRNA molecules trapped in stalled 50S ribosomal subunits, and thus maintains levels of free tRNAs and 50S ribosomes. This Chlamydia muridarum (strain MoPn / Nigg) protein is Peptidyl-tRNA hydrolase.